A 231-amino-acid polypeptide reads, in one-letter code: Enolase-phosphatase E1 (231 aa).

The tract at residues 206–231 (LLERPGNAPQPKHSHPKISSFENFNP) is disordered.

It belongs to the HAD-like hydrolase superfamily. MasA/MtnC family. In terms of assembly, monomer. The cofactor is Mg(2+).

The catalysed reaction is 5-methylsulfanyl-2,3-dioxopentyl phosphate + H2O = 1,2-dihydroxy-5-(methylsulfanyl)pent-1-en-3-one + phosphate. It participates in amino-acid biosynthesis; L-methionine biosynthesis via salvage pathway; L-methionine from S-methyl-5-thio-alpha-D-ribose 1-phosphate: step 3/6. The protein operates within amino-acid biosynthesis; L-methionine biosynthesis via salvage pathway; L-methionine from S-methyl-5-thio-alpha-D-ribose 1-phosphate: step 4/6. Bifunctional enzyme that catalyzes the enolization of 2,3-diketo-5-methylthiopentyl-1-phosphate (DK-MTP-1-P) into the intermediate 2-hydroxy-3-keto-5-methylthiopentenyl-1-phosphate (HK-MTPenyl-1-P), which is then dephosphorylated to form the acireductone 1,2-dihydroxy-3-keto-5-methylthiopentene (DHK-MTPene). This chain is Enolase-phosphatase E1, found in Leptospira borgpetersenii serovar Hardjo-bovis (strain JB197).